A 528-amino-acid polypeptide reads, in one-letter code: Protein arginine N-methyltransferase 3 (528 aa).

Positions 1-42 (MCSLAAGNGQGAELGPEPLELSDSGDDAGWEDEDADAEPAQG) are disordered. Residue cysteine 2 is modified to N-acetylcysteine. Phosphoserine occurs at positions 22 and 24. Over residues 23 to 37 (DSGDDAGWEDEDADA) the composition is skewed to acidic residues. A C2H2-type zinc finger spans residues 46 to 69 (TPCLFCDRLFRSAEETFSHCKLEH). Phosphoserine is present on serine 169. Positions 184-528 (MKQFAQDFVM…NSSTQTYSLQ (345 aa)) are mediates interaction with ALDH1A1. The 315-residue stretch at 214–528 (DGVYFSSYGH…NSSTQTYSLQ (315 aa)) folds into the SAM-dependent MTase PRMT-type domain. The S-adenosyl-L-homocysteine site is built by arginine 236, glycine 260, aspartate 282, serine 284, isoleucine 310, and glutamate 311. Active-site residues include glutamate 326 and glutamate 335.

Belongs to the class I-like SAM-binding methyltransferase superfamily. Protein arginine N-methyltransferase family. In terms of assembly, monomer and homodimer. Interacts with EPB41L3 (via FERM domain); the interaction is direct and inhibits the protein-arginine N-methyltransferase activity of PRMT3. Interacts with the 40S ribosomal protein RPS2. Interacts with ALDH1A1; the interaction is direct, inhibits ALDH1A1 aldehyde dehydrogenase activity and is independent of the methyltransferase activity of PRMT3. In terms of tissue distribution, ubiquitously expressed.

It localises to the cytoplasm. It is found in the cytosol. The protein localises to the nucleus. It carries out the reaction L-arginyl-[protein] + S-adenosyl-L-methionine = N(omega)-methyl-L-arginyl-[protein] + S-adenosyl-L-homocysteine + H(+). The catalysed reaction is L-arginyl-[protein] + 2 S-adenosyl-L-methionine = N(omega),N(omega)-dimethyl-L-arginyl-[protein] + 2 S-adenosyl-L-homocysteine + 2 H(+). Inhibited by N-ethylmaleimide and high concentrations of zinc chloride. In terms of biological role, protein-arginine N-methyltransferase that catalyzes both the monomethylation and asymmetric dimethylation of the guanidino nitrogens of arginine residues in target proteins, and therefore falls into the group of type I methyltransferases. Catalyzes the asymmetric arginine dimethylation at multiple sites in the Arg/Gly-rich region of small ribosomal subunit protein uS5/RPS2. Also appears to methylate other ribosomal proteins. May regulate retinoic acid synthesis and signaling by inhibiting ALDH1A1 retinal dehydrogenase activity. Contributes to methylation of histone H4 'Arg-3', a specific tag for epigenetic transcriptional activation. Promotes osteogenesis. This is Protein arginine N-methyltransferase 3 from Rattus norvegicus (Rat).